Here is a 527-residue protein sequence, read N- to C-terminus: Monooxygenase aurF (527 aa).

An N-terminal signal peptide occupies residues 1–19; the sequence is MPNPTVAIVGLGALGLVTL. N-linked (GlcNAc...) asparagine glycosylation is present at asparagine 59.

Belongs to the FMO family. In terms of assembly, might be part of an extracellular enzyme complex composed of GIP1, aurF, aurO and aurS. The cofactor is FAD.

It localises to the secreted. It is found in the extracellular space. It functions in the pathway pigment biosynthesis. Monooxygenase; part of the gene cluster that mediates the biosynthesis of aurofusarin, a red mycelium pigment which is acting as a mycotoxin. The first step is performed by the polyketide synthase which condenses one acetyl-CoA and 6 malonyl-CoA units to form the first intermediate, the cyclic heptaketide and yellow pigment YWA1. The C2 hydroxyl group in the pyrone ring of YWA1 is probably formed during ring closure by an aldol-type cyclization reaction. The dehydratase aurZ then acts as the first tailoring enzyme in the aurofusarin biosynthetic pathway by converting YWA1 to nor-rubrofusarin. Nor-rubrofusarin is then methylated to rubrofusarin by the O-methyltransferase aurJ. Rubrofusarin is then transported across the plasma membrane by the rubrofusarin-specific pump aurT for further enzymatic processing by the extracellular complex composed of GIP1, aurF, aurO and aurS to yield aurofusarin. This chain is Monooxygenase aurF, found in Gibberella zeae (strain ATCC MYA-4620 / CBS 123657 / FGSC 9075 / NRRL 31084 / PH-1) (Wheat head blight fungus).